The sequence spans 157 residues: C-type lectin 9a (157 aa).

The N-terminal stretch at 1-23 is a signal peptide; it reads MGRFIFVSFGLLVVFLSLSGTGA. Intrachain disulfides connect Cys-27–Cys-38, Cys-55–Cys-151, and Cys-126–Cys-143. One can recognise a C-type lectin domain in the interval 34-152; sequence YDQYCYKPFN…CQAKKPFVCK (119 aa).

Belongs to the snaclec family. Heteromultimer; disulfide-linked. Expressed by the venom gland.

The protein localises to the secreted. In terms of biological role, interferes with one step of hemostasis (modulation of platelet aggregation, or coagulation cascade, for example). This chain is C-type lectin 9a, found in Crotalus adamanteus (Eastern diamondback rattlesnake).